A 497-amino-acid polypeptide reads, in one-letter code: UDP-N-acetylmuramoyl-L-alanyl-D-glutamate--2,6-diaminopimelate ligase (497 aa).

Serine 33 contacts UDP-N-acetyl-alpha-D-muramoyl-L-alanyl-D-glutamate. Glycine 119 to threonine 125 serves as a coordination point for ATP. Residues threonine 161–threonine 162, serine 188, glutamine 194, and arginine 196 contribute to the UDP-N-acetyl-alpha-D-muramoyl-L-alanyl-D-glutamate site. The residue at position 228 (lysine 228) is an N6-carboxylysine. Meso-2,6-diaminopimelate-binding positions include arginine 390, aspartate 414–arginine 417, glycine 465, and glutamate 469. A Meso-diaminopimelate recognition motif motif is present at residues aspartate 414 to arginine 417.

This sequence belongs to the MurCDEF family. MurE subfamily. Requires Mg(2+) as cofactor. Post-translationally, carboxylation is probably crucial for Mg(2+) binding and, consequently, for the gamma-phosphate positioning of ATP.

It localises to the cytoplasm. It carries out the reaction UDP-N-acetyl-alpha-D-muramoyl-L-alanyl-D-glutamate + meso-2,6-diaminopimelate + ATP = UDP-N-acetyl-alpha-D-muramoyl-L-alanyl-gamma-D-glutamyl-meso-2,6-diaminopimelate + ADP + phosphate + H(+). It functions in the pathway cell wall biogenesis; peptidoglycan biosynthesis. Functionally, catalyzes the addition of meso-diaminopimelic acid to the nucleotide precursor UDP-N-acetylmuramoyl-L-alanyl-D-glutamate (UMAG) in the biosynthesis of bacterial cell-wall peptidoglycan. The polypeptide is UDP-N-acetylmuramoyl-L-alanyl-D-glutamate--2,6-diaminopimelate ligase (Synechococcus elongatus (strain ATCC 33912 / PCC 7942 / FACHB-805) (Anacystis nidulans R2)).